Here is a 210-residue protein sequence, read N- to C-terminus: Putative fructokinase-8 (210 aa).

The protein belongs to the carbohydrate kinase PfkB family.

The catalysed reaction is D-fructose + ATP = D-fructose 6-phosphate + ADP + H(+). Its pathway is glycan biosynthesis; starch biosynthesis. Functionally, may play an important role in maintaining the flux of carbon towards starch formation. The sequence is that of Putative fructokinase-8 from Arabidopsis thaliana (Mouse-ear cress).